The chain runs to 452 residues: MELLKLNRSLPGPGPGAALCRPEGPLLNGSGAGNLSCEPPRIRGAGTRELELAVRITLYAAIFLMSVAGNVLIIVVLGLSRRLRTVTNAFLLSLAVSDLLLAVACMPFTLLPNLMGTFIFGTVVCKAVSYFMGVSVSVSTLSLVAIALERYSAICRPLQARVWQTRSHAARVIVATWMLSGLLMVPYPVYTAVQPAGPRVLQCMHRWPSARIRQTWSVLLLLLLFFVPGVVMAVAYGLISRELYLGLRFDGDSDCESQSQVGSQGGLPGGAGQGPAHPNGHCRSETRLAGEDGDGCYVQLPRSRPALEMSALTAPTPGPGSGPRPAQAKLLAKKRVVRMLLVIVVLFFLCWLPVYSANTWRAFDGPGAHRALSGAPISFIHLLSYASACVNPLVYCFMHRRFRQACLDTCARCCPRPPRARPRPLPDEDPPTPSIASLSRLSYTTISTLGPG.

Residues 1-57 are Extracellular-facing; that stretch reads MELLKLNRSLPGPGPGAALCRPEGPLLNGSGAGNLSCEPPRIRGAGTRELELAVRIT. Asn7, Asn28, and Asn34 each carry an N-linked (GlcNAc...) asparagine glycan. The helical transmembrane segment at 58 to 78 threads the bilayer; it reads LYAAIFLMSVAGNVLIIVVLG. Over 79–99 the chain is Cytoplasmic; the sequence is LSRRLRTVTNAFLLSLAVSDL. The helical transmembrane segment at 100-120 threads the bilayer; sequence LLAVACMPFTLLPNLMGTFIF. The Extracellular segment spans residues 121–127; sequence GTVVCKA. A disulfide bridge connects residues Cys125 and Cys203. A helical transmembrane segment spans residues 128–148; that stretch reads VSYFMGVSVSVSTLSLVAIAL. Over 149–171 the chain is Cytoplasmic; sequence ERYSAICRPLQARVWQTRSHAAR. The chain crosses the membrane as a helical span at residues 172–192; that stretch reads VIVATWMLSGLLMVPYPVYTA. The Extracellular portion of the chain corresponds to 193 to 218; that stretch reads VQPAGPRVLQCMHRWPSARIRQTWSV. Residues 219 to 239 form a helical membrane-spanning segment; sequence LLLLLLFFVPGVVMAVAYGLI. Residues 240–339 lie on the Cytoplasmic side of the membrane; sequence SRELYLGLRF…LLAKKRVVRM (100 aa). Positions 256 to 285 are disordered; sequence ESQSQVGSQGGLPGGAGQGPAHPNGHCRSE. Residues 263 to 273 show a composition bias toward gly residues; the sequence is SQGGLPGGAGQ. Residues 340–360 traverse the membrane as a helical segment; it reads LLVIVVLFFLCWLPVYSANTW. Topologically, residues 361 to 376 are extracellular; sequence RAFDGPGAHRALSGAP. Residues 377–397 form a helical membrane-spanning segment; it reads ISFIHLLSYASACVNPLVYCF. At 398–452 the chain is on the cytoplasmic side; sequence MHRRFRQACLDTCARCCPRPPRARPRPLPDEDPPTPSIASLSRLSYTTISTLGPG. Cys413 is lipidated: S-palmitoyl cysteine.

Belongs to the G-protein coupled receptor 1 family.

It is found in the cell membrane. Its function is as follows. Receptor for gastrin and cholecystokinin. The CCK-B receptors occur throughout the central nervous system where they modulate anxiety, analgesia, arousal, and neuroleptic activity. This receptor mediates its action by association with G proteins that activate a phosphatidylinositol-calcium second messenger system. This Sus scrofa (Pig) protein is Gastrin/cholecystokinin type B receptor.